Consider the following 183-residue polypeptide: Translation initiation factor IF-3 (183 aa).

Belongs to the IF-3 family. Monomer.

Its subcellular location is the cytoplasm. IF-3 binds to the 30S ribosomal subunit and shifts the equilibrium between 70S ribosomes and their 50S and 30S subunits in favor of the free subunits, thus enhancing the availability of 30S subunits on which protein synthesis initiation begins. The sequence is that of Translation initiation factor IF-3 from Pseudomonas fluorescens (strain SBW25).